Consider the following 101-residue polypeptide: Large ribosomal subunit protein uL23 (101 aa).

The protein belongs to the universal ribosomal protein uL23 family. Part of the 50S ribosomal subunit. Contacts protein L29, and trigger factor when it is bound to the ribosome.

Its function is as follows. One of the early assembly proteins it binds 23S rRNA. One of the proteins that surrounds the polypeptide exit tunnel on the outside of the ribosome. Forms the main docking site for trigger factor binding to the ribosome. This chain is Large ribosomal subunit protein uL23, found in Corynebacterium kroppenstedtii (strain DSM 44385 / JCM 11950 / CIP 105744 / CCUG 35717).